Consider the following 418-residue polypeptide: Putative ion-transport protein YfeO (418 aa).

12 consecutive transmembrane segments (helical) span residues 10–30 (LLLS…LIVV), 54–74 (DSPL…GLVI), 99–119 (ALPG…SLGP), 120–140 (EHPI…RLLP), 149–169 (ILAS…AALI), 186–206 (LFAP…FFHP), 223–243 (ILSG…AVWC), 258–278 (VLVL…GGPV), 300–320 (DYFL…ASGF), 322–342 (GGRI…LHEH), 343–363 (VPAV…VLVV), and 371–391 (LFMA…CIVM).

Belongs to the chloride channel (TC 2.A.49) family.

It localises to the cell membrane. This chain is Putative ion-transport protein YfeO, found in Shigella boydii serotype 4 (strain Sb227).